The following is a 453-amino-acid chain: Gastrin/cholecystokinin type B receptor (453 aa).

Over methionine 1–arginine 57 the chain is Extracellular. 3 N-linked (GlcNAc...) asparagine glycosylation sites follow: asparagine 7, asparagine 30, and asparagine 36. Residues valine 58 to leucine 79 form a helical membrane-spanning segment. Topologically, residues glycine 80 to threonine 87 are cytoplasmic. A helical transmembrane segment spans residues valine 88–proline 109. Residues phenylalanine 110–serine 131 are Extracellular-facing. Cysteine 127 and cysteine 206 are oxidised to a cystine. Residues tyrosine 132–leucine 150 form a helical membrane-spanning segment. The Cytoplasmic portion of the chain corresponds to glutamate 151 to histidine 170. A helical transmembrane segment spans residues alanine 171–tyrosine 189. Residues proline 190–serine 220 lie on the Extracellular side of the membrane. The chain crosses the membrane as a helical span at residues valine 221 to serine 243. Topologically, residues arginine 244–arginine 339 are cytoplasmic. The interval serine 258–glutamate 286 is disordered. The chain crosses the membrane as a helical span at residues methionine 340–tryptophan 361. The Extracellular segment spans residues arginine 362–serine 379. A helical transmembrane segment spans residues phenylalanine 380 to histidine 400. The Cytoplasmic portion of the chain corresponds to arginine 401 to glycine 453. Cysteine 414 carries S-palmitoyl cysteine lipidation. Residues arginine 422 to glycine 453 are disordered. Over residues serine 435–glycine 453 the composition is skewed to polar residues.

It belongs to the G-protein coupled receptor 1 family. Parietal cells, pancreas, brain and various neoplastic tissues.

Its subcellular location is the cell membrane. In terms of biological role, receptor for gastrin and cholecystokinin. The CCK-B receptors occur throughout the central nervous system where they modulate anxiety, analgesia, arousal, and neuroleptic activity. This receptor mediates its action by association with G proteins that activate a phosphatidylinositol-calcium second messenger system. In Canis lupus familiaris (Dog), this protein is Gastrin/cholecystokinin type B receptor (CCKBR).